The primary structure comprises 995 residues: MSSLPRRAKVQVQGVVLKDEFSSFSELSSASEEDDKEDSAWEPQKKVPRSRKQPPPKESKPKRMPQVKKNAPQISDGSEVVVVKEELNSSVAIADTALEDRKNKLNTVQTLKTAKTKRKCAAQPHAVRRTKKLKVDEETSKASYLEGESNSSETPSTSTVWGGTCKKEENDDEFTFGQSPLKKIKTETCPQGQPVKFPANANHIKEEVEMNWDIVQVLSERTNIEPWVCTNTIRLFNDDNTIPFIIRYRKELINNLDADSLREVQQTLEELRAVAKKVHSTIQKIKKEGKMSECLLKAMLNCKTFEELEHVSAPYKTGSKGTKAQRARQLGLEGAARALLEKPGELSLLSYIRPDVKGLSTLQDIEIGAQHILADMIAKDKGTLDFIRNLCQNRHVCIQSSLAKVSSKKVNEKDVDKFLLYQHFSCNIRNIHHHQILAINRGENLKVLTVKVNISDGVKDEFCRWCIQNRWRPRSFARPELMKILRNSLNDSFKRLIYPLLCREFRAKLTSDAEKESVMMFGRNLRQLLLTSPVPGRTLMGVDPGYKHGCKLAIISPTSQILHTDVVYLHCGQGFREAEKIKMLLLNFNCSTVVIGNGTACRETEAYFADLIMKNYFAPLDVVYCIVSEAGASIYSVSPEANKEMPGLDPNLRSAVSIARRVQDPLAELVKIEPKHIGVGMYQHDVSQTLLKATLDSVVEECVSFVGVDINICSEVLLRHIAGLNANRAKNIIEWREKNGPFINREQLKKVKGLGPKSFQQCAGFIRINQDYIQTFCSQQTETSGQIQGVAVTSSADVEVTNEKQGKKKSKTVANVLLKPNPLDQTCIHPESYDIAMRFLSSIGGTLYEIGKPEMQQKINSFLEKEGMEKIAERLQTTVHTLQVIIDGLSQPESFDFRTDFDKPDFKRSIVCLKDLQVGTVLTGKVENATLFGIFVDIGVGKSGLIPIRNVTEAKLSKTKKRRSLGLGPGERVEVQVLNIDIPRSRITLDLIRVL.

The disordered stretch occupies residues 23-78; sequence SFSELSSASEEDDKEDSAWEPQKKVPRSRKQPPPKESKPKRMPQVKKNAPQISDGS. Residue K84 forms a Glycyl lysine isopeptide (Lys-Gly) (interchain with G-Cter in SUMO2) linkage. A compositionally biased stretch (basic residues) spans 116-132; sequence TKRKCAAQPHAVRRTKK. The disordered stretch occupies residues 116-164; sequence TKRKCAAQPHAVRRTKKLKVDEETSKASYLEGESNSSETPSTSTVWGGT. A Glycyl lysine isopeptide (Lys-Gly) (interchain with G-Cter in SUMO2) cross-link involves residue K134. Residues 146–159 show a composition bias toward low complexity; it reads EGESNSSETPSTST. Glycyl lysine isopeptide (Lys-Gly) (interchain with G-Cter in SUMO2) cross-links involve residues K166, K167, and K183. A Glycyl lysine isopeptide (Lys-Gly) (interchain with G-Cter in SUMO1); alternate cross-link involves residue K185. K185 is covalently cross-linked (Glycyl lysine isopeptide (Lys-Gly) (interchain with G-Cter in SUMO2); alternate). Positions 258 to 288 form a coiled coil; sequence ADSLREVQQTLEELRAVAKKVHSTIQKIKKE. Phosphoserine is present on S861. The S1 motif domain maps to 919–992; the sequence is GTVLTGKVEN…PRSRITLDLI (74 aa). K955 is covalently cross-linked (Glycyl lysine isopeptide (Lys-Gly) (interchain with G-Cter in SUMO2)). Residue S964 is modified to Phosphoserine.

The sequence is that of S1 RNA-binding domain-containing protein 1 (SRBD1) from Pongo abelii (Sumatran orangutan).